A 131-amino-acid chain; its full sequence is Profilin-2 (131 aa).

It belongs to the profilin family. Occurs in many kinds of cells as a complex with monomeric actin in a 1:1 ratio.

The protein localises to the cytoplasm. It is found in the cytoskeleton. Functionally, binds to actin and affects the structure of the cytoskeleton. At high concentrations, profilin prevents the polymerization of actin, whereas it enhances it at low concentrations. By binding to PIP2, it inhibits the formation of IP3 and DG. This is Profilin-2 (PRO2) from Parietaria judaica (Pellitory-of-the-wall).